We begin with the raw amino-acid sequence, 209 residues long: Large ribosomal subunit protein uL3 (209 aa).

The tract at residues Tyr-127–Ala-147 is disordered.

This sequence belongs to the universal ribosomal protein uL3 family. In terms of assembly, part of the 50S ribosomal subunit. Forms a cluster with proteins L14 and L19.

In terms of biological role, one of the primary rRNA binding proteins, it binds directly near the 3'-end of the 23S rRNA, where it nucleates assembly of the 50S subunit. This Finegoldia magna (strain ATCC 29328 / DSM 20472 / WAL 2508) (Peptostreptococcus magnus) protein is Large ribosomal subunit protein uL3.